Here is a 362-residue protein sequence, read N- to C-terminus: tRNA/tmRNA (uracil-C(5))-methyltransferase (362 aa).

Positions 186, 214, 219, 235, and 295 each coordinate S-adenosyl-L-methionine. The Nucleophile role is filled by Cys-320. The Proton acceptor role is filled by Glu-354.

The protein belongs to the class I-like SAM-binding methyltransferase superfamily. RNA M5U methyltransferase family. TrmA subfamily.

The catalysed reaction is uridine(54) in tRNA + S-adenosyl-L-methionine = 5-methyluridine(54) in tRNA + S-adenosyl-L-homocysteine + H(+). It catalyses the reaction uridine(341) in tmRNA + S-adenosyl-L-methionine = 5-methyluridine(341) in tmRNA + S-adenosyl-L-homocysteine + H(+). Its function is as follows. Dual-specificity methyltransferase that catalyzes the formation of 5-methyluridine at position 54 (m5U54) in all tRNAs, and that of position 341 (m5U341) in tmRNA (transfer-mRNA). The chain is tRNA/tmRNA (uracil-C(5))-methyltransferase from Dechloromonas aromatica (strain RCB).